The sequence spans 101 residues: Small ribosomal subunit protein uS14 (101 aa).

Belongs to the universal ribosomal protein uS14 family. Part of the 30S ribosomal subunit. Contacts proteins S3 and S10.

In terms of biological role, binds 16S rRNA, required for the assembly of 30S particles and may also be responsible for determining the conformation of the 16S rRNA at the A site. In Bordetella parapertussis (strain 12822 / ATCC BAA-587 / NCTC 13253), this protein is Small ribosomal subunit protein uS14.